Here is an 830-residue protein sequence, read N- to C-terminus: DNA-directed RNA polymerase subunit beta'' (830 aa).

Cysteine 219, cysteine 291, cysteine 298, and cysteine 301 together coordinate Zn(2+).

This sequence belongs to the RNA polymerase beta' chain family. RpoC2 subfamily. As to quaternary structure, in plastids the minimal PEP RNA polymerase catalytic core is composed of four subunits: alpha, beta, beta', and beta''. When a (nuclear-encoded) sigma factor is associated with the core the holoenzyme is formed, which can initiate transcription. Zn(2+) serves as cofactor.

It is found in the plastid. The protein localises to the chloroplast. The enzyme catalyses RNA(n) + a ribonucleoside 5'-triphosphate = RNA(n+1) + diphosphate. Its function is as follows. DNA-dependent RNA polymerase catalyzes the transcription of DNA into RNA using the four ribonucleoside triphosphates as substrates. In Euglena gracilis, this protein is DNA-directed RNA polymerase subunit beta'' (rpoC2).